The primary structure comprises 483 residues: Type 2 glycosyltransferase (483 aa).

Residues A21–L41 form a helical membrane-spanning segment. The Dxd motif signature appears at D156–D158. Residues Q301–W305 carry the QxxxRW motif motif. The N-linked (GlcNAc...) asparagine glycan is linked to N313. The next 3 helical transmembrane spans lie at I336 to W356, A369 to F389, and I396 to A416. N421 carries N-linked (GlcNAc...) asparagine glycosylation.

Belongs to the GT2 glycosyltransferase family.

The protein resides in the cell membrane. In terms of biological role, glycosyltransferase that plays an important role in infection-related morphogenesis and pathogenesis. Involved in stress tolerance and hyphal hydrophobicity via its regulation of the expression of nydrophobin MPG1. May regulate growth, pathogenicity, and cell wall integrity (CWI) through glycosylation of heat shock protein SSB1, and other (unidentified) substrates may contribute to conidiation. Candidate proteins as potential substrates of GT2 include several heat shock proteins (SSB1/MGG_02503, MGG_06759 and MGG_06958), two coiled-coil domain-containing proteins (MGG_04321 and MGG_09571), aminopeptidase 2 (MGG_16472), and a nuclease domain-containing protein (MGG_12646). The protein is Type 2 glycosyltransferase of Pyricularia oryzae (strain 70-15 / ATCC MYA-4617 / FGSC 8958) (Rice blast fungus).